Consider the following 254-residue polypeptide: Phosphoglycerate mutase 1 (254 aa).

Residues 10–17 (RHGESTWN) and 23–24 (SG) each bind substrate. Catalysis depends on H11, which acts as the Tele-phosphohistidine intermediate. A phosphoserine mark is found at S14 and S23. A Phosphotyrosine modification is found at Y26. At S31 the chain carries Phosphoserine. Residues R62, 89–92 (ERHY), and K100 contribute to the substrate site. The active-site Proton donor/acceptor is E89. K106 carries the post-translational modification N6-acetyllysine. 116–117 (RR) contacts substrate. S118 is subject to Phosphoserine. 187-188 (GN) serves as a coordination point for substrate. Position 251 is an N6-acetyllysine; alternate (K251). Position 251 is an N6-succinyllysine; alternate (K251). N6-acetyllysine is present on residues K253 and K254.

It belongs to the phosphoglycerate mutase family. BPG-dependent PGAM subfamily. As to quaternary structure, homodimer. Acetylated at Lys-253, Lys-253 and Lys-254 under high glucose condition. Acetylation increases catalytic activity. Under glucose restriction SIRT1 levels dramatically increase and it deacetylates the enzyme.

The catalysed reaction is (2R)-2-phosphoglycerate = (2R)-3-phosphoglycerate. The enzyme catalyses (2R)-3-phospho-glyceroyl phosphate = (2R)-2,3-bisphosphoglycerate + H(+). Functionally, catalyzes the interconversion of 2-phosphoglycerate and 3-phosphoglyceratea crucial step in glycolysis, by using 2,3-bisphosphoglycerate. Also catalyzes the interconversion of (2R)-2,3-bisphosphoglycerate and (2R)-3-phospho-glyceroyl phosphate. The protein is Phosphoglycerate mutase 1 of Bos taurus (Bovine).